The chain runs to 235 residues: Probable transglycosylase SceD (235 aa).

A signal peptide spans 1 to 26 (MKKTIIASSLAVGLGVVAGNAGHADA). The interval 90-159 (QQDVSAQAST…NASSGSSVNV (70 aa)) is disordered. A compositionally biased stretch (polar residues) spans 99–110 (TVSNQTSAEQVG). Residues 111-159 (SQQQSSQAQPTQTQQAPQTEQTQQPQTEATTSNSSSSNNNASSGSSVNV) show a composition bias toward low complexity.

It belongs to the transglycosylase family. SceD subfamily.

It is found in the secreted. Is able to cleave peptidoglycan and affects clumping and separation of bacterial cells. The chain is Probable transglycosylase SceD (sceD) from Staphylococcus haemolyticus (strain JCSC1435).